An 892-amino-acid chain; its full sequence is DNA mismatch repair protein MutS (892 aa).

607 to 614 lines the ATP pocket; it reads GPNMSGKS. The disordered stretch occupies residues 833-854; it reads EESQLSFFGGEQSPKKQDKPVL. Over residues 845-854 the composition is skewed to basic and acidic residues; the sequence is SPKKQDKPVL.

It belongs to the DNA mismatch repair MutS family.

This protein is involved in the repair of mismatches in DNA. It is possible that it carries out the mismatch recognition step. This protein has a weak ATPase activity. This chain is DNA mismatch repair protein MutS, found in Bacillus cereus (strain Q1).